Reading from the N-terminus, the 735-residue chain is MIP-related peptides (735 aa).

An N-terminal signal peptide occupies residues methionine 1 to serine 20. Residues phenylalanine 21–arginine 135 constitute a propeptide that is removed on maturation. The span at alanine 33 to glutamine 65 shows a compositional bias: low complexity. Disordered regions lie at residues alanine 33 to lysine 212 and phenylalanine 229 to serine 251. Composition is skewed to polar residues over residues histidine 66–alanine 76 and proline 101–proline 125. Residues phenylalanine 142, phenylalanine 153, and phenylalanine 164 each carry the phenylalanine amide modification. Over residues phenylalanine 142–methionine 159 the composition is skewed to basic residues. The propeptide occupies serine 168–arginine 184. A Phenylalanine amide modification is found at phenylalanine 190. Residues serine 194–arginine 203 constitute a propeptide that is removed on maturation. Over residues serine 194–glycine 204 the composition is skewed to basic and acidic residues. Phenylalanine amide is present on residues phenylalanine 209 and phenylalanine 229. The propeptide at phenylalanine 214–phenylalanine 229 is linker peptide. The propeptide occupies serine 233–arginine 249. Phenylalanine 255 carries the post-translational modification Phenylalanine amide. A propeptide spans glutamine 259–alanine 267 (linker peptide). Phenylalanine 274 carries the phenylalanine amide modification. Residues serine 279 to leucine 287 constitute a propeptide, linker peptide. Phenylalanine 294 carries the post-translational modification Phenylalanine amide. The propeptide occupies glutamine 298–arginine 311. Phenylalanine amide is present on phenylalanine 317. Residues arginine 321–arginine 332 constitute a propeptide that is removed on maturation. Phenylalanine 338 carries the phenylalanine amide modification. A propeptide spanning residues arginine 342–arginine 353 is cleaved from the precursor. 2 disordered regions span residues leucine 352–glycine 373 and arginine 381–alanine 400. Phenylalanine 359 is modified (phenylalanine amide). The propeptide occupies arginine 363–arginine 377. At phenylalanine 383 the chain carries Phenylalanine amide. Residues arginine 387–arginine 401 constitute a propeptide that is removed on maturation. Position 407 is a phenylalanine amide (phenylalanine 407). Positions serine 412 to threonine 426 are cleaved as a propeptide — linker peptide. Residues proline 430–proline 464 are disordered. Phenylalanine 433 is modified (phenylalanine amide). The propeptide occupies arginine 437 to arginine 461. Over residues serine 438–serine 447 the composition is skewed to basic and acidic residues. Glutamine 462 carries the pyrrolidone carboxylic acid modification. Phenylalanine 467 carries the post-translational modification Phenylalanine amide. The propeptide occupies tyrosine 471–arginine 493. Pyrrolidone carboxylic acid is present on glutamine 494. Residue phenylalanine 499 is modified to Phenylalanine amide. Residues glutamate 503–arginine 509 constitute a propeptide that is removed on maturation. Isoleucine 515 carries the post-translational modification Isoleucine amide. A propeptide spanning residues phenylalanine 519–arginine 546 is cleaved from the precursor. Position 552 is a methionine amide (methionine 552). Positions threonine 556–lysine 585 are excised as a propeptide. A Valine amide modification is found at valine 592. Leucine 601 carries the post-translational modification Leucine amide. An Isoleucine amide modification is found at isoleucine 610. Valine 619 carries the valine amide modification. Isoleucine amide is present on isoleucine 628. The propeptide at aspartate 632–valine 661 is linker peptide. Glutamine 664 bears the Pyrrolidone carboxylic acid mark. An Isoleucine amide modification is found at isoleucine 669. A propeptide spans glycine 674–glutamate 705 (linker peptide). The residue at position 714 (valine 714) is a Valine amide. Positions glycine 715 to arginine 735 are excised as a propeptide.

As to expression, expressed in the CNS and peripheral tissues (the digestive tract, vasculature, and the reproductive organs).

The protein localises to the secreted. Has some structural and functional features similar to vertebrate opioid peptides. AMRPs are inhibitory on Aplysia esophagus, penis retractor muscle, and body wall muscle. The chain is MIP-related peptides (MRP) from Aplysia californica (California sea hare).